Consider the following 146-residue polypeptide: uncharacterized protein (146 aa).

The span at 86-96 shows a compositional bias: acidic residues; it reads EFDSPMDEEEE. A disordered region spans residues 86 to 124; the sequence is EFDSPMDEEEETKPREASLDQTAPKKSKKEELLVKNNNF.

This is an uncharacterized protein from Ostreid herpesvirus 1 (isolate France) (OsHV-1).